The chain runs to 771 residues: Transcription factor TAS2 (771 aa).

The tract at residues 33 to 53 (RSRAESASGPQQPSRRQPQTS) is disordered. A compositionally biased stretch (low complexity) spans 42-51 (PQQPSRRQPQ). The segment at residues 54–80 (CDLCRSRKIKCDRGTPCGNCRTRGLAC) is a DNA-binding region (zn(2)-C6 fungal-type). The segment at 125-150 (AVGGSGNAENGAHGDATPRVPLSGLE) is disordered.

It is found in the nucleus. Functionally, transcription factor; part of the gene cluster that mediates the biosynthesis of the toxin tenuazonic acid (TeA), an inhibitor of protein biosynthesis on ribosomes by suppressing the release of new protein. Directly regulates the expression of the hybrid PKS-NRPS synthetase TAS1 and the subsequent production of TeA. The polypeptide is Transcription factor TAS2 (Pyricularia oryzae (strain 70-15 / ATCC MYA-4617 / FGSC 8958) (Rice blast fungus)).